Here is a 209-residue protein sequence, read N- to C-terminus: rRNA N(6)-adenosine-methyltransferase METTL5 (209 aa).

S-adenosyl-L-methionine-binding positions include Q28, T31, G59, C62, V64, D81, and D108–V109.

The protein belongs to the methyltransferase superfamily. PrmA family. In terms of assembly, heterodimer; heterodimerizes with TRMT112. In terms of tissue distribution, expressed from very early development (8 post-conceptual weeks) and expression persists through adulthood in multiple substructures of the brain, including the cerebellar cortex, hippocampus, and striatum.

It localises to the nucleus. It is found in the presynapse. Its subcellular location is the postsynapse. It catalyses the reaction adenosine(1832) in 18S rRNA + S-adenosyl-L-methionine = N(6)-methyladenosine(1832) in 18S rRNA + S-adenosyl-L-homocysteine + H(+). With respect to regulation, rRNA N6-adenosine-methyltransferase activity is inhibited by zinc. Its function is as follows. Catalytic subunit of a heterodimer with TRMT112, which specifically methylates the 6th position of adenine in position 1832 of 18S rRNA. N6-methylation of adenine(1832) in 18S rRNA resides in the decoding center of 18S rRNA and is required for translation and embryonic stem cells (ESCs) pluripotency and differentiation. The protein is rRNA N(6)-adenosine-methyltransferase METTL5 of Homo sapiens (Human).